We begin with the raw amino-acid sequence, 116 residues long: Large ribosomal subunit protein uL18 (116 aa).

The protein belongs to the universal ribosomal protein uL18 family. In terms of assembly, part of the 50S ribosomal subunit; part of the 5S rRNA/L5/L18/L25 subcomplex. Contacts the 5S and 23S rRNAs.

Its function is as follows. This is one of the proteins that bind and probably mediate the attachment of the 5S RNA into the large ribosomal subunit, where it forms part of the central protuberance. The sequence is that of Large ribosomal subunit protein uL18 from Shewanella oneidensis (strain ATCC 700550 / JCM 31522 / CIP 106686 / LMG 19005 / NCIMB 14063 / MR-1).